Consider the following 447-residue polypeptide: Probable butyrate:acetyl-CoA coenzyme A-transferase (447 aa).

CoA is bound at residue Gly220–Thr224. The active-site 5-glutamyl coenzyme A thioester intermediate is the Glu245. Ile320 and Gly343 together coordinate CoA.

Belongs to the acetyl-CoA hydrolase/transferase family.

It localises to the cytoplasm. It catalyses the reaction butanoate + acetyl-CoA = butanoyl-CoA + acetate. The protein operates within lipid metabolism; butanoate metabolism. Functionally, coenzyme A-transferase that converts butyrate to butyryl-CoA. Involved in the syntrophic growth of S.wolfei on butyrate in cooperation with methanogens or an appropriate hydrogen-scavenging bacterium, as part of the butyrate oxidation pathway. This chain is Probable butyrate:acetyl-CoA coenzyme A-transferase, found in Syntrophomonas wolfei subsp. wolfei (strain DSM 2245B / Goettingen).